The chain runs to 361 residues: Outer mitochondrial transmembrane helix translocase (361 aa).

Residues 1–15 (MVHAETFSRPLSRNE) lie on the Mitochondrial intermembrane side of the membrane. A helical transmembrane segment spans residues 16–32 (VVGLIFRLTIFGAVTYF). Topologically, residues 33–361 (TIKWMVDAID…QNVLTHVCLD (329 aa)) are cytoplasmic. 133-140 (GPPGCGKT) contacts ATP. Phosphoserine is present on Ser-322.

Belongs to the AAA ATPase family. MSP1 subfamily. As to quaternary structure, interacts with GRIA2 and GRIP1 in an ATP-dependent manner. ATAD1-catalyzed ATP hydrolysis disrupts not only its binding to GRIA2 and GRIP1, but also interaction between GRIP1 and GRIA2, leading to AMPAR complex disassembly.

The protein resides in the mitochondrion outer membrane. Its subcellular location is the peroxisome membrane. The protein localises to the postsynaptic cell membrane. The enzyme catalyses [protein]-with a C-terminal TM segment(out) + ATP + H2O = [protein]-with a C-terminal TM segment(in) + ADP + phosphate + H(+). Its function is as follows. Outer mitochondrial translocase required to remove mislocalized tail-anchored transmembrane proteins on mitochondria. Specifically recognizes and binds tail-anchored transmembrane proteins: acts as a dislocase that mediates the ATP-dependent extraction of mistargeted tail-anchored transmembrane proteins from the mitochondrion outer membrane. Also plays a critical role in regulating the surface expression of AMPA receptors (AMPAR), thereby regulating synaptic plasticity and learning and memory. Required for NMDA-stimulated AMPAR internalization and inhibition of GRIA1 and GRIA2 recycling back to the plasma membrane; these activities are ATPase-dependent. In Bos taurus (Bovine), this protein is Outer mitochondrial transmembrane helix translocase.